A 290-amino-acid polypeptide reads, in one-letter code: MKITASLVKKLRQRMGAGMMDCKKALNATNGNIEKAIDLMRTLNTTKSAKKLDRITIEGLVKINISANKKTVTILEVNSETDFVTKSDTFISFVNMLGVLALKTTPTNIEEFLSQPLSNGDSIEKAREEIIAKVGENITIRRVQTIKTNNGIIGTYKHMDRIAVVTILEKGDETLAKDIAMHIAATNPECITEAELSSDLLEREKAIFIEQSKKSGKPNNIIEKMIIGRMKKFVNGVTLYGQPFIKNHDTTIGKLMQLNNTQVKFFVRFEVGEGIEKKEKNFVDEVMAQI.

The interval 81–84 (TDFV) is involved in Mg(2+) ion dislocation from EF-Tu.

Belongs to the EF-Ts family.

It localises to the cytoplasm. Associates with the EF-Tu.GDP complex and induces the exchange of GDP to GTP. It remains bound to the aminoacyl-tRNA.EF-Tu.GTP complex up to the GTP hydrolysis stage on the ribosome. This Vesicomyosocius okutanii subsp. Calyptogena okutanii (strain HA) protein is Elongation factor Ts.